We begin with the raw amino-acid sequence, 78 residues long: Acyl carrier protein (78 aa).

The Carrier domain maps to 2–77 (SDIEQRVKQA…SAIDYVTKKL (76 aa)). Ser-37 is subject to O-(pantetheine 4'-phosphoryl)serine.

It belongs to the acyl carrier protein (ACP) family. In terms of processing, 4'-phosphopantetheine is transferred from CoA to a specific serine of apo-ACP by AcpS. This modification is essential for activity because fatty acids are bound in thioester linkage to the sulfhydryl of the prosthetic group.

It localises to the cytoplasm. Its pathway is lipid metabolism; fatty acid biosynthesis. Carrier of the growing fatty acid chain in fatty acid biosynthesis. The polypeptide is Acyl carrier protein (Acinetobacter baumannii (strain AB307-0294)).